Consider the following 361-residue polypeptide: Septin-12 (361 aa).

The Septin-type G domain occupies 45-316; it reads MGFEFNIMVV…ENYRIIRLKE (272 aa). Positions 45–318 are interaction with SEPTIN7; that stretch reads MGFEFNIMVV…YRIIRLKESH (274 aa). A G1 motif region spans residues 55-62; the sequence is GQSGLGKS. GTP-binding positions include 55–62, Thr88, Gly114, 194–202, Gly250, and Arg265; these read GQSGLGKS and RADSLTIEE. A G3 motif region spans residues 111–114; the sequence is DTPG. Residues 193–196 form a G4 motif region; it reads ARAD. Residues 257 to 361 form a self-association (via N-terminus) to polymerize octameric septin 12-7-6-2/4-2/4-6-7-12 filaments region; it reads VNGRCVLGRK…WAEDNSDEDF (105 aa). Residues 333–361 are disordered; the sequence is PPPAPTGTRASPGPAKMCRWAEDNSDEDF. Residues 338–347 show a composition bias toward low complexity; sequence TGTRASPGPA.

The protein belongs to the TRAFAC class TrmE-Era-EngA-EngB-Septin-like GTPase superfamily. Septin GTPase family. As to quaternary structure, septins polymerize into heterooligomeric protein complexes that form filaments, and can associate with cellular membranes, actin filaments and microtubules. GTPase activity is required for filament formation. Interacts with SEPTIN6 and SEPTIN11. Component of a octameric complex consisting of SEPTIN12, SEPTIN7, SEPTIN6 and SEPTIN2 or SEPTIN4 in the order 12-7-6-2-2-6-7-12 or 12-7-6-4-4-6-7-12 and located in the sperm annulus; the octamer polymerizes into filaments via the SEPTIN12 N- and C-termini; the SEPTIN12:SEPTIN7 association is mediated by the GTP-binding domains. Interacts with SPAG4 and LMNB1. Associates with alpha- and beta-tubulins.

It localises to the cytoplasm. Its subcellular location is the cytoskeleton. The protein resides in the spindle. The protein localises to the cell projection. It is found in the cilium. It localises to the flagellum. Its function is as follows. Filament-forming cytoskeletal GTPase. May play a role in cytokinesis (Potential). Involved in spermatogenesis. Involved in the morphogenesis of sperm heads and the elongation of sperm tails probably implicating the association with alpha- and beta-tubulins. Forms a filamentous structure with SEPTIN7, SEPTIN6, SEPTIN2 and probably SEPTIN4 at the sperm annulus which is required for the structural integrity and motility of the sperm tail during postmeiotic differentiation. The chain is Septin-12 from Bos taurus (Bovine).